Consider the following 611-residue polypeptide: Chaperone protein DnaK (611 aa).

Thr173 carries the phosphothreonine; by autocatalysis modification. Positions 579–592 are enriched in low complexity; sequence AAGQAEGAQGAQDA. The interval 579–598 is disordered; sequence AAGQAEGAQGAQDAGAKKDN.

It belongs to the heat shock protein 70 family.

Its function is as follows. Acts as a chaperone. This is Chaperone protein DnaK from Bacillus cereus (strain B4264).